The sequence spans 257 residues: Short-chain dehydrogenase reductase 3a (257 aa).

12-36 is a binding site for NAD(+); the sequence is IITGGASGIGAEAVRLFTDHGAKVV. S144 provides a ligand contact to substrate. Y157 serves as the catalytic Proton acceptor.

Belongs to the short-chain dehydrogenases/reductases (SDR) family. In terms of tissue distribution, highly expressed in the radicle tip, lateral root primordia and tips, and the area surrounding the cotyledon hydathode of young seedlings.

Confers resistance to the incompatible pathogenic bacteria P.syringae pv. tomato DC3000 in a PR1-dependent manner. Seems not involved in abscisic acid (ABA) biosynthesis. In Arabidopsis thaliana (Mouse-ear cress), this protein is Short-chain dehydrogenase reductase 3a (SDR3a).